Consider the following 404-residue polypeptide: UPF0674 endoplasmic reticulum membrane protein YNR021W (404 aa).

S2 carries the N-acetylserine modification. The N-linked (GlcNAc...) asparagine glycan is linked to N44. The chain crosses the membrane as a helical span at residues 49 to 68; it reads LCALGVLFLVYAFYKFGNSV. N98 carries N-linked (GlcNAc...) asparagine glycosylation. The disordered stretch occupies residues 369 to 404; sequence AKRRQLKASGQQEKVDQKMKEKRERRLKNKQRTRFQ. Residues 381 to 392 are compositionally biased toward basic and acidic residues; it reads EKVDQKMKEKRE. A compositionally biased stretch (basic residues) spans 393-404; the sequence is RRLKNKQRTRFQ.

It belongs to the UPF0674 family.

The protein resides in the endoplasmic reticulum membrane. The polypeptide is UPF0674 endoplasmic reticulum membrane protein YNR021W (Saccharomyces cerevisiae (strain ATCC 204508 / S288c) (Baker's yeast)).